We begin with the raw amino-acid sequence, 397 residues long: Subtilisin-like protease 12 (397 aa).

An N-terminal signal peptide occupies residues 1–19 (MSIFKMMLIYFAILWVVNA). The propeptide occupies 20–116 (AQLLDIDPQG…VEPNKEMQVA (97 aa)). An Inhibitor I9 domain is found at 35-115 (YIVVMKDRVS…FVEPNKEMQV (81 aa)). Residues Asn-123, Asn-136, and Asn-150 are each glycosylated (N-linked (GlcNAc...) asparagine). A Peptidase S8 domain is found at 125–397 (TWGLSRISHK…NKLLYNGSGA (273 aa)). Catalysis depends on charge relay system residues Asp-157 and His-188. Asn-249, Asn-305, and Asn-334 each carry an N-linked (GlcNAc...) asparagine glycan. Ser-343 acts as the Charge relay system in catalysis. N-linked (GlcNAc...) asparagine glycans are attached at residues Asn-385 and Asn-393.

Belongs to the peptidase S8 family.

The protein localises to the secreted. Its function is as follows. Secreted subtilisin-like serine protease with keratinolytic activity that contributes to pathogenicity. This is Subtilisin-like protease 12 (SUB12) from Trichophyton verrucosum (strain HKI 0517).